The chain runs to 183 residues: A-type ATP synthase subunit E (183 aa).

It belongs to the V-ATPase E subunit family. In terms of assembly, has multiple subunits with at least A(3), B(3), C, D, E, F, H, I and proteolipid K(x).

Its subcellular location is the cell membrane. Functionally, component of the A-type ATP synthase that produces ATP from ADP in the presence of a proton gradient across the membrane. The protein is A-type ATP synthase subunit E of Methanosarcina acetivorans (strain ATCC 35395 / DSM 2834 / JCM 12185 / C2A).